The chain runs to 244 residues: MPRPSLCADSGGGMMTTLTARPEAITFDPQQSAQIVVDMQNAYATPGGYLDLAGFDVSTTRPVIANIQTAVTAARAAGMLIIWFQNGWDEQYVEAGGPGSPNFHKSNALKTMRKQPQLQGKLLAKGSWDYQLVDELVPQPGDIVLPKPRYSGFFNTPLDSILRSRGIRHLVFTGIATNVCVESTLRDGFFLEHFGVVLEDATHQAGPEFAQKAALFNIETFFGWVSDVETFCDALSPTSFARIA.

Aspartate 38 (proton acceptor) is an active-site residue. Residue lysine 147 is part of the active site. Cysteine 180 serves as the catalytic Nucleophile.

This sequence belongs to the isochorismatase family. RutB subfamily.

It carries out the reaction (Z)-3-ureidoacrylate + H2O + H(+) = (Z)-3-aminoacrylate + NH4(+) + CO2. The enzyme catalyses (Z)-3-ureidoacrylate + H2O = (Z)-3-aminoacrylate + carbamate + H(+). The catalysed reaction is (Z)-2-methylureidoacrylate + H2O + H(+) = (Z)-2-methylaminoacrylate + NH4(+) + CO2. Functionally, hydrolyzes ureidoacrylate to form aminoacrylate and carbamate. The carbamate hydrolyzes spontaneously, thereby releasing one of the nitrogen atoms of the pyrimidine ring as ammonia and one of its carbon atoms as CO2. The chain is Ureidoacrylate amidohydrolase RutB from Shigella flexneri serotype X (strain 2002017).